The following is a 520-amino-acid chain: MSLRYPISRIRHFRCQLRELLAAVAGPSIRIFDAGTGSLLSSWPPASYMRPLDSEISPDRASSAGTCAEPPEKRRKLTPPVDESGEAQTEQSAKAKARKSQTAEQAWSTIPILVISGTGDHIVAVTGEDKCLRVFEVKQDGKLTQLTERCIPKRPCAISLTPDNNTILCGDKFGDVYSLPLLPRDEVVLPLRKAAESSKPFQPSATKLTVHTQRNLKALEQQLRTPRAAQEKLEPSFQHRLLLGHVSMLTDLILAPVPSDSSTSPRLYIITSDRDEHIRVSRGPSQAHIIHGYCLGHTSFVSKLCIPPWDPRSLISGGGDNCIICWDWLAGRVAQTIPLVHDGDVAESTKAQPPQSDAPDIAVSGIYAIPFSGNPGLTEHASGGILVALEGVSRLLAFSFGTNGRLTALAPIELSGNALDVVALDDRGTILVSVDNVHKPGSTKELRDSAIGPKLLQCFSARSDGGLKWEESSTQAATTINSREAVDIIAETESRKQVQKISDSLYGIGNLRKWARGEDG.

A disordered region spans residues 51 to 102 (PLDSEISPDRASSAGTCAEPPEKRRKLTPPVDESGEAQTEQSAKAKARKSQT). WD repeat units lie at residues 105–145 (QAWS…KLTQ), 244–291 (GHVS…HIIH), and 296–338 (GHTS…QTIP).

It belongs to the WD repeat TRM82 family. As to quaternary structure, forms a heterodimer with the catalytic subunit TRM8.

The protein resides in the nucleus. The protein operates within tRNA modification; N(7)-methylguanine-tRNA biosynthesis. Functionally, required for the formation of N(7)-methylguanine at position 46 (m7G46) in tRNA. In the complex, it is required to stabilize and induce conformational changes of the catalytic subunit. This chain is tRNA (guanine-N(7)-)-methyltransferase non-catalytic subunit TRM82, found in Coccidioides immitis (strain RS) (Valley fever fungus).